Consider the following 443-residue polypeptide: Putative F-box/FBD/LRR-repeat protein At3g49030 (443 aa).

Positions 20–68 (EDRISELPEDLLLQILSDIPTENVIATSVLSKRWRSLWKMVPNLTFDFT) constitute an F-box domain. LRR repeat units lie at residues 74-100 (HQTF…QLNF), 152-179 (ILEI…RLYE), 180-205 (VHFK…SVHR), 218-252 (VPSL…NIVG), 272-297 (ISDV…SLES), and 320-345 (KERE…KLTG). The FBD domain maps to 357 to 408 (NWNPPKCVPECLLFHLEKFLWTGYEWQRGDEKEVATYILENARLLKKATFST).

This chain is Putative F-box/FBD/LRR-repeat protein At3g49030, found in Arabidopsis thaliana (Mouse-ear cress).